The following is a 543-amino-acid chain: Cytochrome P450 monooxygenase sphH (543 aa).

2 helical membrane passes run 1–21 (MGPIHNYFGVVCLGIAASVYF) and 32–52 (IATFAVLLTGIAISKLLYQLF). Cysteine 487 provides a ligand contact to heme.

This sequence belongs to the cytochrome P450 family. Heme serves as cofactor.

Its subcellular location is the membrane. The enzyme catalyses presphingofungin + 2 reduced [NADPH--hemoprotein reductase] + O2 = sphingofungin B1 + 2 oxidized [NADPH--hemoprotein reductase] + H2O + 2 H(+). Its pathway is secondary metabolite biosynthesis. Cytochrome P450 monooxygenase; part of the gene cluster that mediates the biosynthesis of sphingofungins, bioactive molecules acting as sphingolipid inhibitors via inhibiting serine palmitoyl transferase (SPT). Within the pathway, sphH catalyzes the conversion of presphingofungin into sphingofungin B1 via hydroxylagtion at position C-14. Sphingofungin biosynthesis starts with the PKS sphB that produces an C18 polyketide precursor 3-hydroxyoctadeca-4,10-dienoyl-ACP containing one delta-6 desaturation and one delta-12 desaturation. The aminoacyl transferase sphA uses the sphB product to produce 3-keto-presphingofungin by adding an aminomalonate molecule. SphF then reduces the C-3 ketone of 3-keto-presphingofungin which leads to presphingofungin. The cytochrome P450 monooxygenase sphH converts presphingofungin into sphingofungin B1 which is further converted to sphingofungin B by the dioxygenase sphC. SphC is also able to convert presphingofungin into sphingofungin B2. The acetyltransferase sphE acetylates sphingofungin B to produce sphingofungin C, but can also convert sphingofungin B1 into sphingofungin C1 and sphingofungin B2 into sphingofungin C2. Finally, sphingofungin C can be spontaneously converted into sphingofungin D. This is Cytochrome P450 monooxygenase sphH from Aspergillus fumigatus (strain CBS 144.89 / FGSC A1163 / CEA10) (Neosartorya fumigata).